A 172-amino-acid chain; its full sequence is RNA silencing suppressor p19 (172 aa).

Positions 1–20 (MERAIQGNDTREQANGERWD) are enriched in basic and acidic residues. The interval 1–27 (MERAIQGNDTREQANGERWDGGSGGIT) is disordered.

This sequence belongs to the tombusvirus protein p19 family. In terms of assembly, homodimer.

In terms of biological role, acts as a suppressor of RNA-mediated gene silencing, also known as post-transcriptional gene silencing (PTGS), a mechanism of plant viral defense that limits the accumulation of viral RNAs. Binds to short interfering RNAs (siRNAs) with high affinity. Acts as a molecular caliper to specifically select siRNAs based on the length of the duplex region of the RNA. The chain is RNA silencing suppressor p19 from Dianthus caryophyllus (Carnation).